A 147-amino-acid chain; its full sequence is uncharacterized protein (147 aa).

This is an uncharacterized protein from Human cytomegalovirus (strain AD169) (HHV-5).